The primary structure comprises 298 residues: Iron-regulated virulence regulatory protein IrgB (298 aa).

The HTH lysR-type domain maps to 1-59 (MQDLSAVKAFHALCQHKSLTAAAKALEQPKSTLSRRLAQLEEDLGQSLLMRQGNRLTLT). The H-T-H motif DNA-binding region spans 19–38 (LTAAAKALEQPKSTLSRRLA).

It belongs to the LysR transcriptional regulatory family.

In terms of biological role, transcription activation of the irgA gene. In the presence of sufficient iron, transcription of both irgA and irgB is negatively regulated by a fur-like protein. In low iron conditions, negative regulation of transcription is removed, and production of irgB leads to positive transcriptional activation of irgA. This Vibrio cholerae serotype O1 (strain ATCC 39315 / El Tor Inaba N16961) protein is Iron-regulated virulence regulatory protein IrgB (irgB).